The primary structure comprises 754 residues: Disintegrin and metalloproteinase domain-containing protein 32 (754 aa).

The N-terminal stretch at 1–22 (MLGAMLHTLLLLLLAELGALLA) is a signal peptide. Serine 23 carries the phosphoserine modification. Positions 23 to 176 (SGPESQSSFL…TNYGILINKK (154 aa)) are excised as a propeptide. A glycan (N-linked (GlcNAc...) asparagine) is linked at asparagine 126. Residues 177–689 (PKSPFKNLFP…ERASKNQEKK (513 aa)) lie on the Extracellular side of the membrane. The Peptidase M12B domain maps to 187–384 (LYLEMSIVVD…EGAKCLQNKP (198 aa)). 4 cysteine pairs are disulfide-bonded: cysteine 296-cysteine 379, cysteine 338-cysteine 363, cysteine 340-cysteine 345, and cysteine 454-cysteine 475. N-linked (GlcNAc...) asparagine glycosylation is found at asparagine 362, asparagine 469, asparagine 570, and asparagine 571. A Disintegrin domain is found at 391–483 (AAVCGNGKVE…NCPPDVTINN (93 aa)). The EGF-like domain occupies 628–660 (QSKTCSSKCHGNGVCNSHGVCHCNAGYSPPNCQ). 3 disulfide bridges follow: cysteine 632–cysteine 642, cysteine 636–cysteine 648, and cysteine 650–cysteine 659. Residues 690 to 710 (WLLSLYIVLIILASVFLIGTG) traverse the membrane as a helical segment. The Cytoplasmic portion of the chain corresponds to 711–754 (WKGLKQCGSKEEESMSSESKSEDSTYTYVSRSTSETSSMTSTSS). The segment covering 720-733 (KEEESMSSESKSED) has biased composition (basic and acidic residues). Residues 720–754 (KEEESMSSESKSEDSTYTYVSRSTSETSSMTSTSS) are disordered. Low complexity predominate over residues 734 to 754 (STYTYVSRSTSETSSMTSTSS).

As to expression, expressed in sperm (at protein level). Highly expressed in the testis and weakly expressed in the epididymis, brain and heart.

It localises to the membrane. May play a role in sperm development and fertilization This is a non-catalytic metalloprotease-like protein. The protein is Disintegrin and metalloproteinase domain-containing protein 32 of Mus musculus (Mouse).